The following is a 456-amino-acid chain: Chromosomal replication initiator protein DnaA (456 aa).

The tract at residues 1–83 (MTASLWQQCL…LRFDIGNRPH (83 aa)) is domain I, interacts with DnaA modulators. The domain II stretch occupies residues 83 to 119 (HPVAIARAPARGAAPVNNLQKSWESKADAKPEPNHKS). The tract at residues 120-336 (NTNVNYTFEN…GALNRVIANA (217 aa)) is domain III, AAA+ region. ATP-binding residues include Gly164, Gly166, Lys167, and Thr168. The domain IV, binds dsDNA stretch occupies residues 337–456 (NFTGRAINID…YSNLIRTLSS (120 aa)).

The protein belongs to the DnaA family. In terms of assembly, oligomerizes as a right-handed, spiral filament on DNA at oriC.

Its subcellular location is the cytoplasm. Plays an essential role in the initiation and regulation of chromosomal replication. ATP-DnaA binds to the origin of replication (oriC) to initiate formation of the DNA replication initiation complex once per cell cycle. Binds the DnaA box (a 9 base pair repeat at the origin) and separates the double-stranded (ds)DNA. Forms a right-handed helical filament on oriC DNA; dsDNA binds to the exterior of the filament while single-stranded (ss)DNA is stabiized in the filament's interior. The ATP-DnaA-oriC complex binds and stabilizes one strand of the AT-rich DNA unwinding element (DUE), permitting loading of DNA polymerase. After initiation quickly degrades to an ADP-DnaA complex that is not apt for DNA replication. Binds acidic phospholipids. This is Chromosomal replication initiator protein DnaA from Aeromonas salmonicida (strain A449).